Reading from the N-terminus, the 168-residue chain is MPRSRINGNFIDKTFSIVANILLRIIPTTSGEKEAFTYYRDGMSAQSEGNYAEALQNYYEAMRLEIDPYDRSYILYNIGLIHTSNGEHTKALEYYFRALERNPFLPQAFNNMAVICHYRGEQAIRQGDSEIAEAWFDQAAEYWKQAIALTPGNYIEAHNWLKITRRFE.

TPR repeat units follow at residues 35 to 68 (AFTY…EIDP), 72 to 105 (SYIL…NPFL), and 120 to 153 (GEQA…TPGN).

Belongs to the Ycf3 family.

The protein localises to the plastid. It is found in the chloroplast thylakoid membrane. Its function is as follows. Essential for the assembly of the photosystem I (PSI) complex. May act as a chaperone-like factor to guide the assembly of the PSI subunits. This is Photosystem I assembly protein Ycf3 from Lactuca sativa (Garden lettuce).